Consider the following 566-residue polypeptide: Phenylalanine--tRNA ligase beta subunit (566 aa).

Residues 287–362 (YFQEEVEFNV…IGEGLSSFNP (76 aa)) form the B5 domain. Residues Asp340, Asp346, Glu349, and Asp350 each coordinate Mg(2+).

This sequence belongs to the phenylalanyl-tRNA synthetase beta subunit family. Type 2 subfamily. Tetramer of two alpha and two beta subunits. Requires Mg(2+) as cofactor.

The protein localises to the cytoplasm. It catalyses the reaction tRNA(Phe) + L-phenylalanine + ATP = L-phenylalanyl-tRNA(Phe) + AMP + diphosphate + H(+). The chain is Phenylalanine--tRNA ligase beta subunit from Borreliella burgdorferi (strain ATCC 35210 / DSM 4680 / CIP 102532 / B31) (Borrelia burgdorferi).